A 266-amino-acid polypeptide reads, in one-letter code: Glutamate racemase (266 aa).

Residues 9–10 and 41–42 contribute to the substrate site; these read DS and YG. The active-site Proton donor/acceptor is Cys73. 74 to 75 contributes to the substrate binding site; sequence NS. The Proton donor/acceptor role is filled by Cys183. Position 184–185 (184–185) interacts with substrate; it reads TH.

It belongs to the aspartate/glutamate racemases family.

It catalyses the reaction L-glutamate = D-glutamate. The protein operates within cell wall biogenesis; peptidoglycan biosynthesis. Provides the (R)-glutamate required for cell wall biosynthesis. The polypeptide is Glutamate racemase (Shewanella halifaxensis (strain HAW-EB4)).